A 411-amino-acid chain; its full sequence is Corticotropin-releasing factor receptor 2 (411 aa).

Residues 1–19 constitute a signal peptide (not cleaved); it reads MDAALLHSLLEANCSLALA. The Extracellular portion of the chain corresponds to 1 to 108; the sequence is MDAALLHSLL…EPILDDKQRK (108 aa). N-linked (GlcNAc...) asparagine glycosylation is found at asparagine 13, asparagine 41, asparagine 74, asparagine 86, and asparagine 94. Intrachain disulfides connect cysteine 14/cysteine 50, cysteine 40/cysteine 83, tryptophan 51/arginine 77, and cysteine 64/cysteine 98. The chain crosses the membrane as a helical span at residues 109–139; sequence YDLHYRIALVVNYLGHCVSVAALVAAFLLFL. Over 140–146 the chain is Cytoplasmic; sequence ALRSIRC. A helical transmembrane segment spans residues 147–171; that stretch reads LRNVIHWNLITTFILRNVMWFLLQL. Residues 172–185 are Extracellular-facing; sequence VDHEVHESNEVWCR. Residues cysteine 184 and cysteine 254 are joined by a disulfide bond. Residues 186 to 214 form a helical membrane-spanning segment; that stretch reads CITTIFNYFVVTNFFWMFVEGCYLHTAIV. The Cytoplasmic portion of the chain corresponds to 215-221; that stretch reads MTYSTER. The chain crosses the membrane as a helical span at residues 222–249; that stretch reads LRKCLFLFIGWCIPFPIIVAWAIGKLYY. The Extracellular portion of the chain corresponds to 250 to 265; the sequence is ENEQCWFGKEPGDLVD. The helical transmembrane segment at 266 to 291 threads the bilayer; sequence YIYQGPIILVLLINFVFLFNIVRILM. Residues 292 to 302 lie on the Cytoplasmic side of the membrane; it reads TKLRASTTSET. A helical membrane pass occupies residues 303–327; that stretch reads IQYRKAVKATLVLLPLLGITYMLFF. Residues 328–334 lie on the Extracellular side of the membrane; the sequence is VNPGEDD. The chain crosses the membrane as a helical span at residues 335-364; it reads LSQIMFIYFNSFLQSFQGFFVSVFYCFFNG. Residues 365-411 are Cytoplasmic-facing; the sequence is EVRSAVRKRWHRWQDHHSLRVPMARAMSIPTSPTRISFHSIKQTAAV.

It belongs to the G-protein coupled receptor 2 family. In terms of assembly, monomer. Interacts (via N-terminal extracellular domain) with CRF, UCN, UCN2 and UCN3. Has highest affinity for UCN, and considerably lower affinity for CRF, UNC2 and UCN3. An N-glycosylation site within the signal peptide impedes its proper cleavage and function.

It is found in the cell membrane. Functionally, G-protein coupled receptor for CRH (corticotropin-releasing factor), UCN (urocortin), UCN2 and UCN3. Has high affinity for UCN. Ligand binding causes a conformation change that triggers signaling via guanine nucleotide-binding proteins (G proteins) and down-stream effectors, such as adenylate cyclase. Promotes the activation of adenylate cyclase, leading to increased intracellular cAMP levels. This chain is Corticotropin-releasing factor receptor 2 (CRHR2), found in Homo sapiens (Human).